A 423-amino-acid polypeptide reads, in one-letter code: Gamma-glutamyl phosphate reductase (423 aa).

This sequence belongs to the gamma-glutamyl phosphate reductase family.

It localises to the cytoplasm. The catalysed reaction is L-glutamate 5-semialdehyde + phosphate + NADP(+) = L-glutamyl 5-phosphate + NADPH + H(+). Its pathway is amino-acid biosynthesis; L-proline biosynthesis; L-glutamate 5-semialdehyde from L-glutamate: step 2/2. In terms of biological role, catalyzes the NADPH-dependent reduction of L-glutamate 5-phosphate into L-glutamate 5-semialdehyde and phosphate. The product spontaneously undergoes cyclization to form 1-pyrroline-5-carboxylate. The sequence is that of Gamma-glutamyl phosphate reductase from Roseiflexus castenholzii (strain DSM 13941 / HLO8).